Here is a 364-residue protein sequence, read N- to C-terminus: UDP-N-acetylglucosamine--N-acetylmuramyl-(pentapeptide) pyrophosphoryl-undecaprenol N-acetylglucosamine transferase (364 aa).

UDP-N-acetyl-alpha-D-glucosamine contacts are provided by residues 10–12, N124, R166, S196, and Q297; that span reads TGG.

The protein belongs to the glycosyltransferase 28 family. MurG subfamily.

The protein resides in the cell membrane. It carries out the reaction di-trans,octa-cis-undecaprenyl diphospho-N-acetyl-alpha-D-muramoyl-L-alanyl-D-glutamyl-meso-2,6-diaminopimeloyl-D-alanyl-D-alanine + UDP-N-acetyl-alpha-D-glucosamine = di-trans,octa-cis-undecaprenyl diphospho-[N-acetyl-alpha-D-glucosaminyl-(1-&gt;4)]-N-acetyl-alpha-D-muramoyl-L-alanyl-D-glutamyl-meso-2,6-diaminopimeloyl-D-alanyl-D-alanine + UDP + H(+). It participates in cell wall biogenesis; peptidoglycan biosynthesis. In terms of biological role, cell wall formation. Catalyzes the transfer of a GlcNAc subunit on undecaprenyl-pyrophosphoryl-MurNAc-pentapeptide (lipid intermediate I) to form undecaprenyl-pyrophosphoryl-MurNAc-(pentapeptide)GlcNAc (lipid intermediate II). This is UDP-N-acetylglucosamine--N-acetylmuramyl-(pentapeptide) pyrophosphoryl-undecaprenol N-acetylglucosamine transferase from Thermoanaerobacter pseudethanolicus (strain ATCC 33223 / 39E) (Clostridium thermohydrosulfuricum).